The primary structure comprises 355 residues: uncharacterized protein (355 aa).

The N-terminal 49 residues, 1–49, are a transit peptide targeting the chloroplast; sequence MPMTVVSGRFSTALLPTCFSLSRLHSVKYAAQRRVVFVSRSAHASSASV.

It belongs to the methyltransferase superfamily.

Its subcellular location is the plastid. It localises to the chloroplast. The protein localises to the plastoglobule. This is an uncharacterized protein from Arabidopsis thaliana (Mouse-ear cress).